A 510-amino-acid polypeptide reads, in one-letter code: 2,3-bisphosphoglycerate-independent phosphoglycerate mutase (510 aa).

Mn(2+)-binding residues include Asp-14 and Ser-64. Catalysis depends on Ser-64, which acts as the Phosphoserine intermediate. Residues His-125, Arg-155 to Asp-156, Arg-187, Arg-193, Arg-259 to Arg-262, and Lys-332 each bind substrate. Asp-399, His-403, Asp-440, His-441, and His-459 together coordinate Mn(2+).

It belongs to the BPG-independent phosphoglycerate mutase family. In terms of assembly, monomer. Mn(2+) is required as a cofactor.

It catalyses the reaction (2R)-2-phosphoglycerate = (2R)-3-phosphoglycerate. The protein operates within carbohydrate degradation; glycolysis; pyruvate from D-glyceraldehyde 3-phosphate: step 3/5. Catalyzes the interconversion of 2-phosphoglycerate and 3-phosphoglycerate. The polypeptide is 2,3-bisphosphoglycerate-independent phosphoglycerate mutase (Ectopseudomonas mendocina (strain ymp) (Pseudomonas mendocina)).